A 408-amino-acid chain; its full sequence is Peptidase T (408 aa).

H78 is a Zn(2+) binding site. Residue D80 is part of the active site. Zn(2+) is bound at residue D140. E173 serves as the catalytic Proton acceptor. The Zn(2+) site is built by E174, D196, and H379.

This sequence belongs to the peptidase M20B family. The cofactor is Zn(2+).

It is found in the cytoplasm. The catalysed reaction is Release of the N-terminal residue from a tripeptide.. In terms of biological role, cleaves the N-terminal amino acid of tripeptides. The sequence is that of Peptidase T from Shigella flexneri serotype 5b (strain 8401).